The following is a 316-amino-acid chain: Probable cell division protein WhiA (316 aa).

Residues 275–309 constitute a DNA-binding region (H-T-H motif); sequence TLKELGEMVSSGKISKSGINHRLRKLDEIAEQLRS.

It belongs to the WhiA family.

Involved in cell division and chromosome segregation. This Bacillus licheniformis (strain ATCC 14580 / DSM 13 / JCM 2505 / CCUG 7422 / NBRC 12200 / NCIMB 9375 / NCTC 10341 / NRRL NRS-1264 / Gibson 46) protein is Probable cell division protein WhiA.